The sequence spans 1055 residues: MDS1 and EVI1 complex locus protein EVI1-A (1055 aa).

3 C2H2-type zinc fingers span residues 21 to 48, 75 to 97, and 103 to 125; these read YRCE…VTPH, HECK…LLSH, and YKCD…QMSH. The C2H2-type 4; degenerate zinc-finger motif lies at 131-155; that stretch reads YECENCSKQVFTDPSNLQRHIRSQH. C2H2-type zinc fingers lie at residues 161–183 and 189–211; these read HACS…KHIH and FVCE…KRMH. Residues 218–240 form a C2H2-type 7; atypical zinc finger; that stretch reads IKCKDCGQMFSTTSSLNKHRRFC. 3 disordered regions span residues 324 to 345, 372 to 423, and 531 to 621; these read PVKG…VNQP, FITE…SDKD, and VPLK…PELP. Positions 332 to 345 are enriched in polar residues; the sequence is EQSSKSQSPHVNQP. The segment covering 381-392 has biased composition (basic and acidic residues); it reads RPHEKISDHSES. The segment covering 399–413 has biased composition (polar residues); the sequence is STPSGSDLETTSGSD. The short motif at 422 to 435 is the Nuclear localization signal element; the sequence is KDKLKENGKLYKDK. Positions 531–566 are enriched in basic and acidic residues; sequence VPLKIEPESPKETKKVQKGKTESPFDLTTKRKEEKA. The short motif at 554–558 is the CTBP-binding motif 1 element; the sequence is PFDLT. Positions 569 to 583 are enriched in polar residues; sequence NVPSKSGAPTSSNHD. Positions 585-589 match the CTBP-binding motif 2 motif; it reads PLDLS. Residues 591–601 are compositionally biased toward polar residues; that stretch reads GSRSRAATTKQ. Residues 602 to 621 show a composition bias toward basic and acidic residues; that stretch reads TEPRKNHIFNEKKDMDPELP. C2H2-type zinc fingers lie at residues 734-756, 762-785, and 791-813; these read YTCR…LRTH, YRCK…RNIH, and FKCH…LKKH. Disordered stretches follow at residues 813 to 837 and 922 to 957; these read HENG…GPIL and SVDE…EDFK. Positions 816–827 are enriched in polar residues; that stretch reads GNLSGTAASSPH. Acidic residues predominate over residues 944–954; it reads DDEDDDDDEEE.

In terms of assembly, homooligomer. Interacts with ctbp. As to expression, expressed dynamically during embryonic development; in the developing pronephros, specific areas of the brain (forebrain, midbrain and hindbrain), and in the majority of the visceral arch, and head mesenchyme derived from neural crest cells. Within the pronephros, expressed in the ventroposterior region of the pronephros anlagen from stage 20 (and is absent from the splanchnic layer that forms the glomus), then expression becomes restricted to the distal tubule and duct by the tadpole stage. In adults, expressed in various tissues including kidney, lung, testis, spleen and stomach.

The protein resides in the nucleus. The protein localises to the nucleus speckle. In terms of biological role, transcriptional repressor during pronephros development. Plays a role in regionalization of the pronephros; may promote formation of the distal tubule and duct over formation of the glomus and proximal tubule. The chain is MDS1 and EVI1 complex locus protein EVI1-A (mecom-a) from Xenopus laevis (African clawed frog).